A 633-amino-acid polypeptide reads, in one-letter code: Glutamyl-tRNA(Gln) amidotransferase subunit E (633 aa).

This sequence belongs to the GatB/GatE family. GatE subfamily. In terms of assembly, heterodimer of GatD and GatE.

It catalyses the reaction L-glutamyl-tRNA(Gln) + L-glutamine + ATP + H2O = L-glutaminyl-tRNA(Gln) + L-glutamate + ADP + phosphate + H(+). Its function is as follows. Allows the formation of correctly charged Gln-tRNA(Gln) through the transamidation of misacylated Glu-tRNA(Gln) in organisms which lack glutaminyl-tRNA synthetase. The reaction takes place in the presence of glutamine and ATP through an activated gamma-phospho-Glu-tRNA(Gln). The GatDE system is specific for glutamate and does not act on aspartate. The protein is Glutamyl-tRNA(Gln) amidotransferase subunit E of Methanosarcina acetivorans (strain ATCC 35395 / DSM 2834 / JCM 12185 / C2A).